Reading from the N-terminus, the 229-residue chain is MYTINKNIIVINKPINWTSNDVVQKVKRIIKAKKVGHAGTLDPNASGILVLGINEGTKLLTKLTLDSKTYVAEIQFGISTNTYDSTGEIISKINKFITLTEIESAIENLYKNEYWQKPPKFSALKINGKKAYELARNNISFEIEPRLVKIFEYNILDFNYEKQILKIIIKVSKGFYVRSFAVDLAARINNLAHLLSLVRTESGQFSINDAIEIEQVYDYWNNINKHSTN.

Aspartate 42 serves as the catalytic Nucleophile.

This sequence belongs to the pseudouridine synthase TruB family. Type 1 subfamily.

The catalysed reaction is uridine(55) in tRNA = pseudouridine(55) in tRNA. Responsible for synthesis of pseudouridine from uracil-55 in the psi GC loop of transfer RNAs. The sequence is that of tRNA pseudouridine synthase B from Ureaplasma urealyticum serovar 10 (strain ATCC 33699 / Western).